Here is a 532-residue protein sequence, read N- to C-terminus: Intercellular adhesion molecule 1 (532 aa).

A signal peptide spans 1–27 (MAPSSPRPALPALLVLLGALFPGPGNA). The Extracellular portion of the chain corresponds to 28-480 (QTSVSPPKVI…TVNVLSPRYE (453 aa)). Ig-like C2-type domains follow at residues 41–103 (GGSV…QSTA) and 128–193 (GKDL…LDLR). 3 disulfides stabilise this stretch: Cys-48–Cys-92, Cys-52–Cys-96, and Cys-135–Cys-186. Residue Asn-145 is glycosylated (N-linked (GlcNAc...) asparagine). Positions 152–154 (RGE) match the Cell attachment site; atypical motif. N-linked (GlcNAc...) asparagine glycans are attached at residues Asn-183, Asn-202, Asn-267, and Asn-296. Ig-like C2-type domains lie at 230-297 (DTQG…LGNQ) and 325-378 (GTEV…LEVA). The cysteines at positions 237 and 290 are disulfide-linked. A disulfide bond links Cys-332 and Cys-371. Asn-385 and Asn-406 each carry an N-linked (GlcNAc...) asparagine glycan. 3 cysteine pairs are disulfide-bonded: Cys-403–Cys-419, Cys-419–Cys-457, and Cys-431–Cys-457. Residues 412 to 464 (NSQQTPMCQASGNPLPELKCLKDGTFPLPVGESVTVTRDLEGTYLCRARSTQG) form the Ig-like C2-type 5 domain. Residues 481–503 (IVIITVVAAAVIMGTAGLSTYLY) traverse the membrane as a helical segment. The Cytoplasmic portion of the chain corresponds to 504–532 (NRQRKIRKYRLQQAQKGTPMKPNTQATPP). Phosphothreonine occurs at positions 521 and 530.

It belongs to the immunoglobulin superfamily. ICAM family. As to quaternary structure, homodimer. Interacts with MUC1 and promotes cell aggregation in epithelial cells. Interacts with ARHGEF26/SGEF. Interacts (on T cell side) with CD81, CD247 and CD9 at immunological synapses between antigen-presenting cells and T cells. Monoubiquitinated, which is promoted by MARCH9 and leads to endocytosis.

It localises to the membrane. ICAM proteins are ligands for the leukocyte adhesion protein LFA-1 (integrin alpha-L/beta-2). During leukocyte trans-endothelial migration, ICAM1 engagement promotes the assembly of endothelial apical cups through ARHGEF26/SGEF and RHOG activation. In Pan paniscus (Pygmy chimpanzee), this protein is Intercellular adhesion molecule 1 (ICAM1).